The primary structure comprises 349 residues: MVTYKDAGVDIYEEDRIIRALISKINFEREDAIKPADLKGHYAGAIEFGDYYLVLCTDGVGSKMVVAEMANNFETVPIDMIAMNVNDAICIGAEPVALVDYMAVEEITENIAEQIGKGLNEGIKESNINLIGGETASLPNMIKGIDLAGTVLAVVKKSEIISGQTVKKGDVIVGLRSSGIHSNGLSLARKVFFEISNLNVNSKLSYGKTVADELLTPTRIYVKPVLDMIKKADVKGLAHITGGGFRKLKRLNKEVCYKIDNLPEIPPIFKEIQTLGNVADEEMFKTFNMGIGFCVIVSKENAEKIIEISNQYKIPAFVIGEIEDNIEIDGEFKKETVLVEYNGKKMIME.

This sequence belongs to the AIR synthase family.

The protein resides in the cytoplasm. The catalysed reaction is 2-formamido-N(1)-(5-O-phospho-beta-D-ribosyl)acetamidine + ATP = 5-amino-1-(5-phospho-beta-D-ribosyl)imidazole + ADP + phosphate + H(+). It functions in the pathway purine metabolism; IMP biosynthesis via de novo pathway; 5-amino-1-(5-phospho-D-ribosyl)imidazole from N(2)-formyl-N(1)-(5-phospho-D-ribosyl)glycinamide: step 2/2. The protein is Phosphoribosylformylglycinamidine cyclo-ligase of Methanococcus vannielii (strain ATCC 35089 / DSM 1224 / JCM 13029 / OCM 148 / SB).